Reading from the N-terminus, the 310-residue chain is Protoheme IX farnesyltransferase (310 aa).

9 helical membrane passes run 26–45, 49–71, 95–115, 118–138, 147–167, 174–194, 220–240, 243–263, and 289–309; these read VMSL…PVTV, IALT…NMWW, GEAL…LGLA, LFAA…YSMW, IVIG…VATG, LFMF…LALF, VLVY…TGIG, LYLA…VRIW, and LFLH…GLGG.

It belongs to the UbiA prenyltransferase family. Protoheme IX farnesyltransferase subfamily. In terms of assembly, interacts with CtaA.

The protein localises to the cell inner membrane. The catalysed reaction is heme b + (2E,6E)-farnesyl diphosphate + H2O = Fe(II)-heme o + diphosphate. It participates in porphyrin-containing compound metabolism; heme O biosynthesis; heme O from protoheme: step 1/1. Functionally, converts heme B (protoheme IX) to heme O by substitution of the vinyl group on carbon 2 of heme B porphyrin ring with a hydroxyethyl farnesyl side group. This Cereibacter sphaeroides (strain ATCC 17029 / ATH 2.4.9) (Rhodobacter sphaeroides) protein is Protoheme IX farnesyltransferase.